The chain runs to 449 residues: Alpha-L-fucosidase (449 aa).

Positions 1–19 (MGLLLLLSLLSACFQPRYA) are cleaved as a signal peptide. N-linked (GlcNAc...) asparagine glycans are attached at residues N156, N224, N362, and N375.

The protein belongs to the glycosyl hydrolase 29 family. As to quaternary structure, homotetramer.

The protein localises to the secreted. The enzyme catalyses an alpha-L-fucoside + H2O = L-fucose + an alcohol. Functionally, alpha-L-fucosidase is responsible for hydrolyzing the alpha-1,6-linked fucose joined to the reducing-end N-acetylglucosamine of the carbohydrate moieties of glycoproteins. This chain is Alpha-L-fucosidase, found in Branchiostoma floridae (Florida lancelet).